Reading from the N-terminus, the 233-residue chain is DNA repair protein RecO (233 aa).

The protein belongs to the RecO family.

In terms of biological role, involved in DNA repair and RecF pathway recombination. The chain is DNA repair protein RecO from Pseudomonas aeruginosa (strain UCBPP-PA14).